A 123-amino-acid chain; its full sequence is Large ribosomal subunit protein bL12 (123 aa).

Belongs to the bacterial ribosomal protein bL12 family. Homodimer. Part of the ribosomal stalk of the 50S ribosomal subunit. Forms a multimeric L10(L12)X complex, where L10 forms an elongated spine to which 2 to 4 L12 dimers bind in a sequential fashion. Binds GTP-bound translation factors.

Its function is as follows. Forms part of the ribosomal stalk which helps the ribosome interact with GTP-bound translation factors. Is thus essential for accurate translation. The protein is Large ribosomal subunit protein bL12 of Haemophilus influenzae (strain 86-028NP).